The primary structure comprises 73 residues: Small proline-rich protein 2G (73 aa).

A compositionally biased stretch (low complexity) spans 1-11; it reads MSYQQQQCKQP. A disordered region spans residues 1–20; that stretch reads MSYQQQQCKQPCQPPPVCPT. Tandem repeats lie at residues 21-29, 30-38, and 39-47. The tract at residues 21-47 is 3 X 9 AA approximate tandem repeats; sequence PKCPEPCPPPKCPEPYLPPPCPPEHCP.

The protein belongs to the cornifin (SPRR) family.

Its subcellular location is the cytoplasm. In terms of biological role, cross-linked envelope protein of keratinocytes. It is a keratinocyte protein that first appears in the cell cytosol, but ultimately becomes cross-linked to membrane proteins by transglutaminase. All that results in the formation of an insoluble envelope beneath the plasma membrane. This chain is Small proline-rich protein 2G (SPRR2G), found in Homo sapiens (Human).